Reading from the N-terminus, the 699-residue chain is SPS-sensor serine protease component SSY5 (699 aa).

2 disordered regions span residues 1–113 (MVRF…LQGF) and 129–158 (VKEE…GNAR). Positions 1–381 (MVRFFGLNKE…YCVKDYIKKA (381 aa)) are excised as a propeptide. Basic and acidic residues predominate over residues 8-18 (NKEKNEEKENT). Residues 24–38 (NEQNAAETSSSNVSG) are compositionally biased toward polar residues. Residues 39 to 51 (NEERIDPNSRDTN) show a composition bias toward basic and acidic residues. Over residues 61–78 (STTFGSSIQSSSIFSRGR) the composition is skewed to low complexity. Positions 83–93 (TGASSSMATSE) are enriched in polar residues. Residues 144–154 (SSSTSSTLATS) are compositionally biased toward low complexity. Residues 459–699 (FAITCAHVVL…QWDIDPQLDG (241 aa)) are serine protease. Catalysis depends on charge relay system residues histidine 465, aspartate 545, and serine 640.

The protein belongs to the peptidase S64 family. As to quaternary structure, component of the plasma membrane SPS (SSY1-PTR3-SSY5) amino acid sensor complex. Post-translationally, the propeptide is autoproteolytically cleaved from the catalytic domain but remains associated, forming an inactive protease complex. This processing occurs even in the absence of signaling.

It is found in the cell membrane. Protease component of the SPS-sensor system, which regulates the expression of several amino acid-metabolizing enzymes and amino acid- and peptide-permeases in response to extracellular amino acid levels by controlling the activity of two transcription factors, STP1 and STP2. Catalyzes the activation of these transcription factors, which are synthesized as latent cytoplasmic precursors, by proteolytic removal of an N-terminal inhibitory domain containing cytoplasmic retention motifs. SSY5 binds as an inactive protease complex to STP1. In response to extracellular amino acids and dependent on the other SPS-sensor components, the inhibitory propeptide is induced to dissociate, and thereby enables the catalytic domain to process STP1. The sequence is that of SPS-sensor serine protease component SSY5 (SSY5) from Saccharomyces cerevisiae (strain AWRI1631) (Baker's yeast).